A 204-amino-acid polypeptide reads, in one-letter code: Transcriptional regulator GfcR (204 aa).

The protein belongs to the purine/pyrimidine phosphoribosyltransferase family. GfcR subfamily.

The polypeptide is Transcriptional regulator GfcR (Methanosarcina mazei (strain ATCC BAA-159 / DSM 3647 / Goe1 / Go1 / JCM 11833 / OCM 88) (Methanosarcina frisia)).